Reading from the N-terminus, the 471-residue chain is Glutamyl-tRNA(Gln) amidotransferase subunit A (471 aa).

Catalysis depends on charge relay system residues Lys66 and Ser141. The Acyl-ester intermediate role is filled by Ser165.

Belongs to the amidase family. GatA subfamily. Heterotrimer of A, B and C subunits.

It carries out the reaction L-glutamyl-tRNA(Gln) + L-glutamine + ATP + H2O = L-glutaminyl-tRNA(Gln) + L-glutamate + ADP + phosphate + H(+). Functionally, allows the formation of correctly charged Gln-tRNA(Gln) through the transamidation of misacylated Glu-tRNA(Gln) in organisms which lack glutaminyl-tRNA synthetase. The reaction takes place in the presence of glutamine and ATP through an activated gamma-phospho-Glu-tRNA(Gln). This is Glutamyl-tRNA(Gln) amidotransferase subunit A from Thermus thermophilus (strain ATCC BAA-163 / DSM 7039 / HB27).